The following is a 327-amino-acid chain: Phosphate transport system permease protein PstC (327 aa).

6 helical membrane-spanning segments follow: residues alanine 36–tryptophan 56, valine 89–phenylalanine 109, leucine 128–phenylalanine 148, isoleucine 178–isoleucine 198, isoleucine 235–valine 255, and serine 294–alanine 314. Residues isoleucine 85–alanine 314 enclose the ABC transmembrane type-1 domain.

This sequence belongs to the binding-protein-dependent transport system permease family. CysTW subfamily.

It is found in the cell inner membrane. Its function is as follows. Part of a binding-protein-dependent transport system for phosphate; probably responsible for the translocation of the substrate across the membrane. This Mesorhizobium japonicum (strain LMG 29417 / CECT 9101 / MAFF 303099) (Mesorhizobium loti (strain MAFF 303099)) protein is Phosphate transport system permease protein PstC (pstC).